A 235-amino-acid polypeptide reads, in one-letter code: (5-formylfuran-3-yl)methyl phosphate synthase (235 aa).

K27 functions as the Schiff-base intermediate with substrate in the catalytic mechanism. Residue K85 is the Proton acceptor of the active site.

The protein belongs to the MfnB family.

The enzyme catalyses 2 D-glyceraldehyde 3-phosphate = 4-(hydroxymethyl)-2-furancarboxaldehyde phosphate + phosphate + 2 H2O. Its pathway is cofactor biosynthesis; methanofuran biosynthesis. In terms of biological role, catalyzes the formation of 4-(hydroxymethyl)-2-furancarboxaldehyde phosphate (4-HFC-P) from two molecules of glyceraldehyde-3-P (GA-3-P). In Methanococcus aeolicus (strain ATCC BAA-1280 / DSM 17508 / OCM 812 / Nankai-3), this protein is (5-formylfuran-3-yl)methyl phosphate synthase.